Here is a 701-residue protein sequence, read N- to C-terminus: Elongation factor G 2 (701 aa).

The tr-type G domain maps to 8-290 (NRYRNIGIVA…AVIEFLPAPA (283 aa)). GTP contacts are provided by residues 17–24 (AHVDAGKT), 88–92 (DTPGH), and 142–145 (NKMD).

This sequence belongs to the TRAFAC class translation factor GTPase superfamily. Classic translation factor GTPase family. EF-G/EF-2 subfamily.

It localises to the cytoplasm. In terms of biological role, catalyzes the GTP-dependent ribosomal translocation step during translation elongation. During this step, the ribosome changes from the pre-translocational (PRE) to the post-translocational (POST) state as the newly formed A-site-bound peptidyl-tRNA and P-site-bound deacylated tRNA move to the P and E sites, respectively. Catalyzes the coordinated movement of the two tRNA molecules, the mRNA and conformational changes in the ribosome. This Pseudoalteromonas atlantica (strain T6c / ATCC BAA-1087) protein is Elongation factor G 2.